The chain runs to 606 residues: Protein spire homolog 2 (606 aa).

A KIND domain is found at 21–219; that stretch reads LSLEEVLKSY…RALFLETLEL (199 aa). The interval 147 to 181 is disordered; sequence KHCGSNAAKDEGYSGQDEEEEEEEEEEEEGAGRGI. Residues 162 to 175 are compositionally biased toward acidic residues; that stretch reads QDEEEEEEEEEEEE. 2 WH2 domains span residues 263-277 and 357-374; these read QLMKELRQGVKLKKV and LHDRVLAEIRQDHKLRPV. Disordered stretches follow at residues 438–464 and 517–537; these read DEDSPDGVDMRRVESSPTPLKRDRSFS and CRSLSSDDRSSDPGGDSASHG. Residues 445-464 show a composition bias toward basic and acidic residues; it reads VDMRRVESSPTPLKRDRSFS. A spir-box region spans residues 554 to 574; it reads LALTVDGVINVRRILVKAEME.

The protein belongs to the spire family.

It localises to the cytoplasm. Its subcellular location is the cytoskeleton. The protein localises to the cytosol. It is found in the cell membrane. The protein resides in the cytoplasmic vesicle membrane. Functionally, acts as an actin nucleation factor, remains associated with the slow-growing pointed end of the new filament. Involved in intracellular vesicle transport along actin fibers, providing a novel link between actin cytoskeleton dynamics and intracellular transport. Required for asymmetric spindle positioning and asymmetric cell division during oocyte meiosis. Required for normal formation of the cleavage furrow and for polar body extrusion during female germ cell meiosis. Also acts in the nucleus: together with SPIRE1 and SPIRE2, promotes assembly of nuclear actin filaments in response to DNA damage in order to facilitate movement of chromatin and repair factors after DNA damage. The chain is Protein spire homolog 2 (spire2) from Danio rerio (Zebrafish).